Reading from the N-terminus, the 362-residue chain is Cytochrome c peroxidase, mitochondrial (362 aa).

The N-terminal 40 residues, 1–40, are a transit peptide targeting the mitochondrion; the sequence is MASASRQILRAASRASTRTAFAPAASRGLAARTIAGRRFY. Catalysis depends on His121, which acts as the Proton acceptor. Heme b is bound at residue His244. Trp260 acts as the Tryptophan radical intermediate in catalysis.

It belongs to the peroxidase family. Cytochrome c peroxidase subfamily. As to quaternary structure, forms a one-to-one complex with cytochrome c. Heme b serves as cofactor.

The protein resides in the mitochondrion matrix. Its subcellular location is the mitochondrion intermembrane space. It carries out the reaction 2 Fe(II)-[cytochrome c] + H2O2 + 2 H(+) = 2 Fe(III)-[cytochrome c] + 2 H2O. In terms of biological role, destroys radicals which are normally produced within the cells and which are toxic to biological systems. This Pyricularia oryzae (strain 70-15 / ATCC MYA-4617 / FGSC 8958) (Rice blast fungus) protein is Cytochrome c peroxidase, mitochondrial (CCP1).